We begin with the raw amino-acid sequence, 494 residues long: Alpha-amylase-related protein (494 aa).

An N-terminal signal peptide occupies residues 1–20; sequence MIKFALALTLCLAGASLSLA. Gln21 is modified (pyrrolidone carboxylic acid). An intrachain disulfide couples Cys48 to Cys104. Residues Asn118, Gln169, and Asp178 each coordinate Ca(2+). A disulfide bond links Cys157 and Cys171. Arg206 lines the chloride pocket. Asp208 serves as the catalytic Nucleophile. His212 lines the Ca(2+) pocket. The active-site Proton donor is the Glu245. Chloride contacts are provided by Asn308 and Arg343. 3 cysteine pairs are disulfide-bonded: Cys376–Cys382, Cys418–Cys441, and Cys448–Cys460.

This sequence belongs to the glycosyl hydrolase 13 family. As to quaternary structure, monomer. Ca(2+) serves as cofactor. It depends on chloride as a cofactor.

The protein resides in the secreted. It catalyses the reaction Endohydrolysis of (1-&gt;4)-alpha-D-glucosidic linkages in polysaccharides containing three or more (1-&gt;4)-alpha-linked D-glucose units.. The polypeptide is Alpha-amylase-related protein (Amyrel) (Drosophila lini (Fruit fly)).